A 198-amino-acid chain; its full sequence is Holliday junction branch migration complex subunit RuvA (198 aa).

Residues 1–61 (MYEYFEGIIQ…DNDQTLYGFE (61 aa)) are domain I. Residues 62–140 (GAADKRTFNQ…TDGQPAAAAI (79 aa)) form a domain II region. The flexible linker stretch occupies residues 141 to 145 (APVAS). Positions 146 to 198 (DVDSELADALAALVALGYPQRTVDGLTDTLKAFSAKTTDAYLREGLRLLSGKA) are domain III.

This sequence belongs to the RuvA family. As to quaternary structure, homotetramer. Forms an RuvA(8)-RuvB(12)-Holliday junction (HJ) complex. HJ DNA is sandwiched between 2 RuvA tetramers; dsDNA enters through RuvA and exits via RuvB. An RuvB hexamer assembles on each DNA strand where it exits the tetramer. Each RuvB hexamer is contacted by two RuvA subunits (via domain III) on 2 adjacent RuvB subunits; this complex drives branch migration. In the full resolvosome a probable DNA-RuvA(4)-RuvB(12)-RuvC(2) complex forms which resolves the HJ.

It localises to the cytoplasm. Functionally, the RuvA-RuvB-RuvC complex processes Holliday junction (HJ) DNA during genetic recombination and DNA repair, while the RuvA-RuvB complex plays an important role in the rescue of blocked DNA replication forks via replication fork reversal (RFR). RuvA specifically binds to HJ cruciform DNA, conferring on it an open structure. The RuvB hexamer acts as an ATP-dependent pump, pulling dsDNA into and through the RuvAB complex. HJ branch migration allows RuvC to scan DNA until it finds its consensus sequence, where it cleaves and resolves the cruciform DNA. The protein is Holliday junction branch migration complex subunit RuvA of Lacticaseibacillus casei (strain BL23) (Lactobacillus casei).